The sequence spans 440 residues: 2-methylisoborneol synthase (440 aa).

2 disordered regions span residues 1–33 and 46–74; these read MPDS…IPSA and LHPP…TVTG. Composition is skewed to pro residues over residues 9-29 and 50-63; these read TPPP…PAPV and VTVP…PPAP. Mg(2+)-binding residues include D197, D198, E202, N345, S349, and E353.

It belongs to the terpene synthase family. 2-methylisoborneol synthase subfamily. Mg(2+) is required as a cofactor.

The catalysed reaction is (E)-2-methylgeranyl diphosphate + H2O = 2-methylisoborneol + diphosphate. In terms of biological role, catalyzes the cyclization of 2-methylgeranyl diphosphate (2-MeGPP) to 2-methylisoborneol (2-MIB), which likely involves the intermediacy of 2-methyllinalyl diphosphate. Is also able to catalyze the cyclization of geranyl diphosphate (GPP), albeit with much lower efficiency, leading to the formation of a complex mixture of cyclic monoterpenes, consisting of alpha-pinene (6%), beta-pinene (23%), limonene (32%), gamma-terpinene (29%), and delta-terpinene (10%). This chain is 2-methylisoborneol synthase, found in Streptomyces coelicolor (strain ATCC BAA-471 / A3(2) / M145).